We begin with the raw amino-acid sequence, 349 residues long: Nicotinate-nucleotide--dimethylbenzimidazole phosphoribosyltransferase (349 aa).

The Proton acceptor role is filled by Glu315.

It belongs to the CobT family.

It catalyses the reaction 5,6-dimethylbenzimidazole + nicotinate beta-D-ribonucleotide = alpha-ribazole 5'-phosphate + nicotinate + H(+). It participates in nucleoside biosynthesis; alpha-ribazole biosynthesis; alpha-ribazole from 5,6-dimethylbenzimidazole: step 1/2. Functionally, catalyzes the synthesis of alpha-ribazole-5'-phosphate from nicotinate mononucleotide (NAMN) and 5,6-dimethylbenzimidazole (DMB). The chain is Nicotinate-nucleotide--dimethylbenzimidazole phosphoribosyltransferase from Variovorax paradoxus (strain S110).